Here is a 293-residue protein sequence, read N- to C-terminus: 4-hydroxy-tetrahydrodipicolinate synthase (293 aa).

Threonine 45 contacts pyruvate. The Proton donor/acceptor role is filled by tyrosine 133. Residue lysine 162 is the Schiff-base intermediate with substrate of the active site. Residue isoleucine 204 participates in pyruvate binding.

This sequence belongs to the DapA family. Homotetramer; dimer of dimers.

It is found in the cytoplasm. The catalysed reaction is L-aspartate 4-semialdehyde + pyruvate = (2S,4S)-4-hydroxy-2,3,4,5-tetrahydrodipicolinate + H2O + H(+). It functions in the pathway amino-acid biosynthesis; L-lysine biosynthesis via DAP pathway; (S)-tetrahydrodipicolinate from L-aspartate: step 3/4. In terms of biological role, catalyzes the condensation of (S)-aspartate-beta-semialdehyde [(S)-ASA] and pyruvate to 4-hydroxy-tetrahydrodipicolinate (HTPA). The protein is 4-hydroxy-tetrahydrodipicolinate synthase of Mesorhizobium japonicum (strain LMG 29417 / CECT 9101 / MAFF 303099) (Mesorhizobium loti (strain MAFF 303099)).